A 508-amino-acid chain; its full sequence is Maturase K (508 aa).

It belongs to the intron maturase 2 family. MatK subfamily.

Its subcellular location is the plastid. The protein resides in the chloroplast. In terms of biological role, usually encoded in the trnK tRNA gene intron. Probably assists in splicing its own and other chloroplast group II introns. The chain is Maturase K from Huidobria chilensis (Loasa chilensis).